The sequence spans 73 residues: Large ribosomal subunit protein bL31 (73 aa).

Belongs to the bacterial ribosomal protein bL31 family. Type A subfamily. Part of the 50S ribosomal subunit.

Its function is as follows. Binds the 23S rRNA. This is Large ribosomal subunit protein bL31 from Paracoccus denitrificans (strain Pd 1222).